Reading from the N-terminus, the 111-residue chain is Photosystem II reaction center Psb28 protein (111 aa).

This sequence belongs to the Psb28 family. As to quaternary structure, part of the photosystem II complex.

Its subcellular location is the cellular thylakoid membrane. This Trichormus variabilis (strain ATCC 29413 / PCC 7937) (Anabaena variabilis) protein is Photosystem II reaction center Psb28 protein.